The chain runs to 335 residues: Nucleoid-associated protein Pput_1012 (335 aa).

This sequence belongs to the YejK family.

Its subcellular location is the cytoplasm. The protein resides in the nucleoid. This is Nucleoid-associated protein Pput_1012 from Pseudomonas putida (strain ATCC 700007 / DSM 6899 / JCM 31910 / BCRC 17059 / LMG 24140 / F1).